We begin with the raw amino-acid sequence, 485 residues long: Zinc finger protein 639 (485 aa).

Over residues 1-14 the composition is skewed to basic residues; it reads MNEYPKKRKRKTLH. The segment at 1–20 is disordered; it reads MNEYPKKRKRKTLHPSRYSD. Position 60 is a phosphoserine (serine 60). Residue lysine 76 forms a Glycyl lysine isopeptide (Lys-Gly) (interchain with G-Cter in SUMO2) linkage. Serine 88 carries the post-translational modification Phosphoserine. Residues lysine 177, lysine 181, and lysine 226 each participate in a glycyl lysine isopeptide (Lys-Gly) (interchain with G-Cter in SUMO2) cross-link. C2H2-type zinc fingers lie at residues 204–227, 233–255, 260–283, 289–311, 374–397, 403–425, 431–454, and 460–482; these read YKCE…ILKH, NVCR…AKLH, YICK…ADTH, YWCE…FQEH, FVCQ…AIEH, HVCD…LNSH, YLCQ…DFKH, and HKCS…LPVH. The segment at 371-455 is interaction with CTNNA2; the sequence is KNFFVCQVCG…LKIHLDFKHS (85 aa).

The protein belongs to the krueppel C2H2-type zinc-finger protein family. In terms of assembly, interacts with CTNNA2.

The protein resides in the nucleus. Its function is as follows. Binds DNA and may function as a transcriptional repressor. This is Zinc finger protein 639 (ZNF639) from Bos taurus (Bovine).